The chain runs to 539 residues: Chaperonin GroEL (539 aa).

Residues 29–32 (TLGP), 86–90 (DGTTT), glycine 413, 477–479 (DAL), and aspartate 493 each bind ATP.

It belongs to the chaperonin (HSP60) family. As to quaternary structure, forms a cylinder of 14 subunits composed of two heptameric rings stacked back-to-back. Interacts with the co-chaperonin GroES.

It localises to the cytoplasm. It catalyses the reaction ATP + H2O + a folded polypeptide = ADP + phosphate + an unfolded polypeptide.. Its function is as follows. Together with its co-chaperonin GroES, plays an essential role in assisting protein folding. The GroEL-GroES system forms a nano-cage that allows encapsulation of the non-native substrate proteins and provides a physical environment optimized to promote and accelerate protein folding. The polypeptide is Chaperonin GroEL (Clostridium perfringens (strain ATCC 13124 / DSM 756 / JCM 1290 / NCIMB 6125 / NCTC 8237 / Type A)).